We begin with the raw amino-acid sequence, 325 residues long: Acetyl-coenzyme A carboxylase carboxyl transferase subunit alpha (325 aa).

In terms of domain architecture, CoA carboxyltransferase C-terminal spans 44 to 298; it reads QLEARADQLR…KAAIQDNLQA (255 aa).

The protein belongs to the AccA family. In terms of assembly, acetyl-CoA carboxylase is a heterohexamer composed of biotin carboxyl carrier protein (AccB), biotin carboxylase (AccC) and two subunits each of ACCase subunit alpha (AccA) and ACCase subunit beta (AccD).

The protein localises to the cytoplasm. The catalysed reaction is N(6)-carboxybiotinyl-L-lysyl-[protein] + acetyl-CoA = N(6)-biotinyl-L-lysyl-[protein] + malonyl-CoA. The protein operates within lipid metabolism; malonyl-CoA biosynthesis; malonyl-CoA from acetyl-CoA: step 1/1. Its function is as follows. Component of the acetyl coenzyme A carboxylase (ACC) complex. First, biotin carboxylase catalyzes the carboxylation of biotin on its carrier protein (BCCP) and then the CO(2) group is transferred by the carboxyltransferase to acetyl-CoA to form malonyl-CoA. This is Acetyl-coenzyme A carboxylase carboxyl transferase subunit alpha from Picosynechococcus sp. (strain ATCC 27264 / PCC 7002 / PR-6) (Agmenellum quadruplicatum).